Consider the following 863-residue polypeptide: MSRFFRGGDDSSSESSSDEEELYSTSEEEEEEDQDQEESSEEEDEEESSDEDEGPKKTGLSRFLVDQASSDSEGSDEEGATKVKSAKDKRFDELEATITTIQNRQKIDDWGSIANEFDKLNRQVVKLQDGGKAPKSYIKCIAELEDFLNETLAKQKVTPKNKKLNATNARGLNAVKQRIKKNNKDYQAQIDAFRKDSDDFMESDEEEVPAPKTKVRFQEAAAPEEAAEDEDKGFARVDKRGKAIPFSPESIQKHLRAIVESRGRKNTDRGEQIKIMEELNKVAETPYLKIRVLQTLVSARFDLGSGTTTSMPLDHWKAAERELAALLTLLETHKDHVVIEGAEEWEDDDKTPILGPDDKYIKVPGSVVSYIERLDDELTRSLQSIDPHTSEYIERLTDEASLYNIILQGLLYYETIRKDASLEIPQESLNRIIQRRLDHVYFKPAQVVKILEENAWKQVSSGVDSAITPRGASGDAGKLMYTLCNYLFDNSEGIIRARAMLSQIYFLALHDEYYKARDMMLTSHLQESIANFDVATQILYNRTLVQVGLCAFRRGLVYDAQNTLQDICGSGRQKELLAQGVMMQRYNQVTPEQERLEKQRQLPFHMHINLELLECVYLTCSMLLEIPLLAQIGSSPDIKKRVISKTYRRMLEYHERQIFTGPPENTRDHVMQASKALAAGEWKKATHFIHSIKIWDLMPSSEEIKAMLAKQIQEEGLRTYLFTYAPFYDTLAIETLSTMFELDSVKVSAVVSKMISHEELAAALDQVTKTVIFRKGVELSRLQSLALALSDKASALIETNERTLEVRTQGSANAFSRKDGRQGGQRGGGQRSGRGGARAGGNAQRQAGGTQFTGGALGAAVRG.

Residues 1-92 (MSRFFRGGDD…VKSAKDKRFD (92 aa)) are disordered. Over residues 16 to 53 (SSDEEELYSTSEEEEEEDQDQEESSEEEDEEESSDEDE) the composition is skewed to acidic residues. Positions 79-92 (GATKVKSAKDKRFD) are enriched in basic and acidic residues. Residues 604 to 778 (FHMHINLELL…KTVIFRKGVE (175 aa)) form the PCI domain. The segment at 808 to 863 (TQGSANAFSRKDGRQGGQRGGGQRSGRGGARAGGNAQRQAGGTQFTGGALGAAVRG) is disordered. The segment covering 822–839 (QGGQRGGGQRSGRGGARA) has biased composition (gly residues). Residues 840–850 (GGNAQRQAGGT) show a composition bias toward low complexity.

The protein belongs to the eIF-3 subunit C family. As to quaternary structure, component of the eukaryotic translation initiation factor 3 (eIF-3) complex.

Its subcellular location is the cytoplasm. Its function is as follows. Component of the eukaryotic translation initiation factor 3 (eIF-3) complex, which is involved in protein synthesis of a specialized repertoire of mRNAs and, together with other initiation factors, stimulates binding of mRNA and methionyl-tRNAi to the 40S ribosome. The eIF-3 complex specifically targets and initiates translation of a subset of mRNAs involved in cell proliferation. This is Eukaryotic translation initiation factor 3 subunit C from Chaetomium globosum (strain ATCC 6205 / CBS 148.51 / DSM 1962 / NBRC 6347 / NRRL 1970) (Soil fungus).